Here is a 151-residue protein sequence, read N- to C-terminus: U-scoloptoxin(17)-Er2a (151 aa).

Positions 1-22 (MKSFFVVFAIVFQATLVALSLA) are cleaved as a signal peptide.

The protein belongs to the scoloptoxin-17 family. In terms of processing, contains 5 disulfide bonds. Expressed by the venom gland.

Its subcellular location is the secreted. The protein is U-scoloptoxin(17)-Er2a of Ethmostigmus rubripes (Giant centipede).